Reading from the N-terminus, the 398-residue chain is MVLTTRHHLDGFRSIQVMLGALEHPLDVMKASKGRSCSENDHRMYRFSKNLPRGVCSPLTTGPHPTTHLEPTMHQPHRSLLRKAFQMIPPLDGSLHKGQAGRIGIVGGSKDYTGAPFYSGYASLRLGSDLSHVICEPSASTVIKTYSPDLMVHSYLSSPKEPEAYASHQNLFEQLLDRLHVLVVGPGLGRDTEMQDWAEWTLKTAIKKKLHLVLDADALWLLVKKPDLLRGYPNAILTPNHVEFQRLLKACSIEPRENDDDGLLAMELSKALGGCSILQKGSIDLVAREGSEVAKVSCEGSPKRCGGQGDILSGLVGTWCAWTKLYFERQSQDEKPKSHELPISSEEAWIIAAVLGSEITRTCSRLAYHKLGRSMQSSDMLGYIGEAFELVMHGHTKD.

The YjeF C-terminal domain maps to 80–391 (LLRKAFQMIP…GYIGEAFELV (312 aa)). Residues glycine 187 and 240 to 246 (NHVEFQR) contribute to the (6S)-NADPHX site. ATP is bound by residues 280-284 (KGSID) and 300-309 (GSPKRCGGQG). Aspartate 310 serves as a coordination point for (6S)-NADPHX.

It belongs to the NnrD/CARKD family. Requires Mg(2+) as cofactor.

Its subcellular location is the cytoplasm. It catalyses the reaction (6S)-NADHX + ATP = ADP + phosphate + NADH + H(+). The catalysed reaction is (6S)-NADPHX + ATP = ADP + phosphate + NADPH + H(+). Functionally, catalyzes the dehydration of the S-form of NAD(P)HX at the expense of ATP, which is converted to ADP. Together with NAD(P)HX epimerase, which catalyzes the epimerization of the S- and R-forms, the enzyme allows the repair of both epimers of NAD(P)HX, a damaged form of NAD(P)H that is a result of enzymatic or heat-dependent hydration. The chain is ATP-dependent (S)-NAD(P)H-hydrate dehydratase 1 from Puccinia graminis f. sp. tritici (strain CRL 75-36-700-3 / race SCCL) (Black stem rust fungus).